A 1259-amino-acid polypeptide reads, in one-letter code: Autism susceptibility gene 2 protein (1259 aa).

Disordered stretches follow at residues 1–87, 108–285, 299–470, 771–1027, and 1119–1146; these read MDGP…EEDI, LKPQ…QDCC, CPQV…PPPP, PNSM…MTVG, and REPH…HERG. Positions 8–17 are enriched in basic residues; it reads HGLRKKRRSR. Over residues 28–41 the composition is skewed to gly residues; it reads GGLGAGAAGGGGAG. Over residues 108–118 the composition is skewed to basic and acidic residues; sequence LKPQERVEKRQ. Positions 136–147 are enriched in basic residues; sequence HSKKSRLSHPHH. A compositionally biased stretch (basic and acidic residues) spans 148–158; it reads YSSDRENDRNL. The span at 177-192 shows a compositional bias: polar residues; it reads PGQNSCRDSDSESASG. The segment covering 276–285 has biased composition (basic and acidic residues); it reads RSQEKSQDCC. Residues 289–472 are important for regulation of lamellipodia formation; it reads IFEPVVLKDP…PTALPPPPPL (184 aa). Composition is skewed to pro residues over residues 331 to 345 and 353 to 365; these read PPQP…PQGP and APQP…PRPQ. Positions 386–410 are enriched in low complexity; that stretch reads SLSQPLSAYNSSSLSLNSLSSSRSS. Positions 436-447 are enriched in polar residues; it reads PNHSPLHSFTPT. The segment covering 801 to 810 has biased composition (pro residues); it reads PSFPTPPPWL. 3 stretches are compositionally biased toward basic and acidic residues: residues 813 to 850, 876 to 935, and 960 to 993; these read GELE…VEKR, IRAH…EAKQ, and REAE…HDLP. Residues 1125–1134 show a composition bias toward basic residues; the sequence is SHHHHHHHHP. A phosphoserine mark is found at serine 1198 and serine 1233. A disordered region spans residues 1217-1259; the sequence is LSAPPPLISTLGGRPVSPRRTTPLSAEIRERPPSHTLKDIEAR. Residues 1243-1259 show a composition bias toward basic and acidic residues; that stretch reads EIRERPPSHTLKDIEAR.

It belongs to the AUTS2 family. As to quaternary structure, component of a PRC1-like complex that contains PCGF5, RNF2, CSNK2B, RYBP and AUTS2. Within this complex, interacts directly with PCGF5 and CSNK2B. Interacts with the histone acetyltransferase EP300/p300. Interacts (via Pro-rich region) with PREX1, DOCK1 and ELMO2. Strongly expressed in brain, skeletal muscle and kidney. Also expressed in placenta, lung and leukocytes.

It localises to the nucleus. Its subcellular location is the cytoplasm. It is found in the cytoskeleton. The protein resides in the cell projection. The protein localises to the growth cone. Component of a Polycomb group (PcG) multiprotein PRC1-like complex, a complex class required to maintain the transcriptionally repressive state of many genes, including Hox genes, throughout development. PcG PRC1 complex acts via chromatin remodeling and modification of histones; it mediates monoubiquitination of histone H2A 'Lys-119', rendering chromatin heritably changed in its expressibility. The PRC1-like complex that contains PCGF5, RNF2, CSNK2B, RYBP and AUTS2 has decreased histone H2A ubiquitination activity, due to the phosphorylation of RNF2 by CSNK2B. As a consequence, the complex mediates transcriptional activation. In the cytoplasm, plays a role in axon and dendrite elongation and in neuronal migration during embryonic brain development. Promotes reorganization of the actin cytoskeleton, lamellipodia formation and neurite elongation via its interaction with RAC guanine nucleotide exchange factors, which then leads to the activation of RAC1. The chain is Autism susceptibility gene 2 protein (AUTS2) from Homo sapiens (Human).